The following is a 132-amino-acid chain: UPF0146 protein PF0123 (132 aa).

Belongs to the UPF0146 family.

This is UPF0146 protein PF0123 from Pyrococcus furiosus (strain ATCC 43587 / DSM 3638 / JCM 8422 / Vc1).